The chain runs to 319 residues: Ribonucleoside-diphosphate reductase small chain (319 aa).

Fe cation-binding residues include Asp-70, Glu-101, and His-104. Residue Tyr-108 is part of the active site. The Fe cation site is built by Glu-163, Glu-197, and His-200. Residues 313–319 (FSLDVDF) form an interaction with R1 region.

Belongs to the ribonucleoside diphosphate reductase small chain family. In terms of assembly, interacts with RNR1/OPG080 subunit. Can interact with host RNR1 supunit. It depends on Fe cation as a cofactor.

It catalyses the reaction a 2'-deoxyribonucleoside 5'-diphosphate + [thioredoxin]-disulfide + H2O = a ribonucleoside 5'-diphosphate + [thioredoxin]-dithiol. Its function is as follows. Ribonucleoside-diphosphate reductase holoenzyme provides the precursors necessary for viral DNA synthesis. Allows virus growth in non-dividing cells. Catalyzes the biosynthesis of deoxyribonucleotides from the corresponding ribonucleotides. The sequence is that of Ribonucleoside-diphosphate reductase small chain (OPG048) from Homo sapiens (Human).